We begin with the raw amino-acid sequence, 385 residues long: Probable tRNA sulfurtransferase (385 aa).

A THUMP domain is found at 57 to 160; the sequence is DGVIERVKKV…RGNAYVFTDK (104 aa). ATP-binding positions include 180–181, 205–206, Arg-262, Gly-284, and Gln-293; these read ML and YY.

Belongs to the ThiI family.

It is found in the cytoplasm. It carries out the reaction [ThiI sulfur-carrier protein]-S-sulfanyl-L-cysteine + a uridine in tRNA + 2 reduced [2Fe-2S]-[ferredoxin] + ATP + H(+) = [ThiI sulfur-carrier protein]-L-cysteine + a 4-thiouridine in tRNA + 2 oxidized [2Fe-2S]-[ferredoxin] + AMP + diphosphate. The enzyme catalyses [ThiS sulfur-carrier protein]-C-terminal Gly-Gly-AMP + S-sulfanyl-L-cysteinyl-[cysteine desulfurase] + AH2 = [ThiS sulfur-carrier protein]-C-terminal-Gly-aminoethanethioate + L-cysteinyl-[cysteine desulfurase] + A + AMP + 2 H(+). It functions in the pathway cofactor biosynthesis; thiamine diphosphate biosynthesis. Its function is as follows. Catalyzes the ATP-dependent transfer of a sulfur to tRNA to produce 4-thiouridine in position 8 of tRNAs, which functions as a near-UV photosensor. Also catalyzes the transfer of sulfur to the sulfur carrier protein ThiS, forming ThiS-thiocarboxylate. This is a step in the synthesis of thiazole, in the thiamine biosynthesis pathway. The sulfur is donated as persulfide by IscS. The chain is Probable tRNA sulfurtransferase from Clostridium perfringens (strain SM101 / Type A).